We begin with the raw amino-acid sequence, 83 residues long: Large ribosomal subunit protein bL27c (83 aa).

The disordered stretch occupies residues 1–21 (MAHKKGAGSTKNGRDSNAKRL).

This sequence belongs to the bacterial ribosomal protein bL27 family.

It is found in the plastid. It localises to the chloroplast. The polypeptide is Large ribosomal subunit protein bL27c (Phaeodactylum tricornutum (strain CCAP 1055/1)).